An 80-amino-acid polypeptide reads, in one-letter code: Large ribosomal subunit protein uL29 (80 aa).

Belongs to the universal ribosomal protein uL29 family.

This chain is Large ribosomal subunit protein uL29 (rpmC), found in Mycobacterium leprae (strain TN).